A 256-amino-acid chain; its full sequence is MKIITCYKCVPDEQDIAINNADGTLDFSKADSKISQYDLNAIEAACQLKQQLGDAQVVAMSVGGKALTNAKGRKDVLSRGPDELIVVIDDQFEQALPQHTATALAAAAQKSGFDLLICGDGSSDLYAQQVGLLVGEALNIPAINGVSKILSLTDSTLTVERELEDEVETLSIPLPAVIAVSTDINTPQIPSMKAILGAAKKPVQVWSPADIGLNSVPAYSTQQVAAPKQRERQRVVIEGDGEEQIAAFVENLRKII.

Belongs to the ETF beta-subunit/FixA family. In terms of assembly, heterodimer of FixA and FixB.

It functions in the pathway amine and polyamine metabolism; carnitine metabolism. Functionally, required for anaerobic carnitine reduction. May bring reductant to CaiA. The sequence is that of Protein FixA from Salmonella paratyphi A (strain ATCC 9150 / SARB42).